Here is a 300-residue protein sequence, read N- to C-terminus: NAD kinase (300 aa).

The active-site Proton acceptor is D75. Residues 75–76, 149–150, R177, D179, 190–195, A214, and Q248 contribute to the NAD(+) site; these read DG, ND, and TAYALS.

Belongs to the NAD kinase family. A divalent metal cation serves as cofactor.

It is found in the cytoplasm. The catalysed reaction is NAD(+) + ATP = ADP + NADP(+) + H(+). Functionally, involved in the regulation of the intracellular balance of NAD and NADP, and is a key enzyme in the biosynthesis of NADP. Catalyzes specifically the phosphorylation on 2'-hydroxyl of the adenosine moiety of NAD to yield NADP. This is NAD kinase from Burkholderia pseudomallei (strain K96243).